A 375-amino-acid chain; its full sequence is Actin, cytoplasmic (375 aa).

Belongs to the actin family.

It is found in the cytoplasm. The protein resides in the cytoskeleton. The enzyme catalyses ATP + H2O = ADP + phosphate + H(+). In terms of biological role, actins are highly conserved proteins that are involved in various types of cell motility and are ubiquitously expressed in all eukaryotic cells. The sequence is that of Actin, cytoplasmic from Oxytricha trifallax (Sterkiella histriomuscorum).